Here is a 329-residue protein sequence, read N- to C-terminus: NADH-quinone oxidoreductase subunit H (329 aa).

Helical transmembrane passes span 9–29 (LIKI…ATYI), 42–62 (GPCY…IKLF), 75–95 (FIFT…MAPI), 117–137 (IGFL…ILAG), 154–174 (IQLL…LMVV), 188–208 (GGFL…FLIA), 238–258 (LKWG…SFVI), 269–291 (WGFI…LSMW), and 309–329 (WKIM…IILI).

The protein belongs to the complex I subunit 1 family. NDH-1 is composed of 14 different subunits. Subunits NuoA, H, J, K, L, M, N constitute the membrane sector of the complex.

The protein resides in the cell inner membrane. The catalysed reaction is a quinone + NADH + 5 H(+)(in) = a quinol + NAD(+) + 4 H(+)(out). Functionally, NDH-1 shuttles electrons from NADH, via FMN and iron-sulfur (Fe-S) centers, to quinones in the respiratory chain. The immediate electron acceptor for the enzyme in this species is believed to be ubiquinone. Couples the redox reaction to proton translocation (for every two electrons transferred, four hydrogen ions are translocated across the cytoplasmic membrane), and thus conserves the redox energy in a proton gradient. This subunit may bind ubiquinone. The chain is NADH-quinone oxidoreductase subunit H from Helicobacter pylori (strain HPAG1).